Here is a 238-residue protein sequence, read N- to C-terminus: uncharacterized protein (238 aa).

The Response regulatory domain maps to 3 to 116 (RVIIVDDEQP…RLAKTLTRLS (114 aa)). Residue D54 is modified to 4-aspartylphosphate. The 102-residue stretch at 136–237 (IPCSGHNRIF…LKSLKEKLGI (102 aa)) folds into the HTH LytTR-type domain.

This is an uncharacterized protein from Yersinia pestis.